A 596-amino-acid polypeptide reads, in one-letter code: Aspartate--tRNA(Asp/Asn) ligase (596 aa).

Position 175 (Glu-175) interacts with L-aspartate. An aspartate region spans residues 199–202 (QQYK). The L-aspartate site is built by Arg-221 and His-454. 221–223 (RDE) contributes to the ATP binding site. Residue Glu-488 participates in ATP binding. Residue Arg-495 participates in L-aspartate binding. 540–543 (GVDR) contributes to the ATP binding site.

It belongs to the class-II aminoacyl-tRNA synthetase family. Type 1 subfamily. Homodimer.

Its subcellular location is the cytoplasm. It carries out the reaction tRNA(Asx) + L-aspartate + ATP = L-aspartyl-tRNA(Asx) + AMP + diphosphate. Its function is as follows. Aspartyl-tRNA synthetase with relaxed tRNA specificity since it is able to aspartylate not only its cognate tRNA(Asp) but also tRNA(Asn). Reaction proceeds in two steps: L-aspartate is first activated by ATP to form Asp-AMP and then transferred to the acceptor end of tRNA(Asp/Asn). This chain is Aspartate--tRNA(Asp/Asn) ligase, found in Bartonella henselae (strain ATCC 49882 / DSM 28221 / CCUG 30454 / Houston 1) (Rochalimaea henselae).